Reading from the N-terminus, the 201-residue chain is 3-isopropylmalate dehydratase small subunit (201 aa).

It belongs to the LeuD family. LeuD type 1 subfamily. In terms of assembly, heterodimer of LeuC and LeuD.

The catalysed reaction is (2R,3S)-3-isopropylmalate = (2S)-2-isopropylmalate. It functions in the pathway amino-acid biosynthesis; L-leucine biosynthesis; L-leucine from 3-methyl-2-oxobutanoate: step 2/4. Catalyzes the isomerization between 2-isopropylmalate and 3-isopropylmalate, via the formation of 2-isopropylmaleate. The sequence is that of 3-isopropylmalate dehydratase small subunit from Klebsiella pneumoniae (strain 342).